The chain runs to 657 residues: uncharacterized protein (657 aa).

Catalysis depends on charge relay system residues serine 518 and histidine 631.

The protein belongs to the peptidase S9C family.

This is an uncharacterized protein from Bacillus subtilis (strain 168).